The chain runs to 799 residues: Ribosome biogenesis protein BOP1 homolog (799 aa).

The tract at residues 1–171 (MPRRVRAQKR…DDTSDEEHSL (171 aa)) is disordered. Positions 58 to 69 (SESDVTDDEQID) are enriched in acidic residues. Over residues 70 to 81 (EEARQADRDLLK) the composition is skewed to basic and acidic residues. Residues 93 to 121 (DPSDADNDDDDDEEEAASDDDDEEEDAEP) show a composition bias toward acidic residues. A compositionally biased stretch (low complexity) spans 122 to 132 (SSDSSNEASDA). WD repeat units follow at residues 457-498 (GHKA…RVVT), 500-538 (DAEV…AAID), 584-626 (PHHA…TQHP), 629-669 (KRNR…KKLL), 670-709 (TGVR…KPYK), 713-752 (YHKY…DLGQ), and 769-799 (SDGM…KLHV).

This sequence belongs to the WD repeat BOP1/ERB1 family.

It is found in the nucleus. It localises to the nucleolus. The protein resides in the nucleoplasm. Its function is as follows. Required for maturation of ribosomal RNAs and formation of the large ribosomal subunit. This chain is Ribosome biogenesis protein BOP1 homolog, found in Monosiga brevicollis (Choanoflagellate).